A 141-amino-acid polypeptide reads, in one-letter code: Hemoglobin subunit alpha (141 aa).

The Globin domain maps to 1 to 141; that stretch reads VLSADDKANV…VSTVLTSKYR (141 aa). Position 3 is a phosphoserine (serine 3). N6-succinyllysine is present on residues lysine 7 and lysine 11. N6-acetyllysine; alternate is present on lysine 16. Residue lysine 16 is modified to N6-succinyllysine; alternate. The residue at position 24 (tyrosine 24) is a Phosphotyrosine. Residue serine 35 is modified to Phosphoserine. Lysine 40 bears the N6-succinyllysine mark. Phosphoserine is present on serine 49. An O2-binding site is contributed by histidine 58. Residue histidine 87 coordinates heme b. Serine 102 carries the phosphoserine modification. Threonine 108 is modified (phosphothreonine). Serine 124 and serine 131 each carry phosphoserine. Residues threonine 134 and threonine 137 each carry the phosphothreonine modification. Serine 138 bears the Phosphoserine mark.

It belongs to the globin family. In terms of assembly, heterotetramer of two alpha chains and two beta chains. As to expression, red blood cells.

Its function is as follows. Involved in oxygen transport from the lung to the various peripheral tissues. The protein is Hemoglobin subunit alpha of Peromyscus californicus (California mouse).